A 483-amino-acid polypeptide reads, in one-letter code: Glutamyl-tRNA(Gln) amidotransferase subunit A (483 aa).

Catalysis depends on charge relay system residues Lys-76 and Ser-151. Ser-175 acts as the Acyl-ester intermediate in catalysis.

This sequence belongs to the amidase family. GatA subfamily. Heterotrimer of A, B and C subunits.

It carries out the reaction L-glutamyl-tRNA(Gln) + L-glutamine + ATP + H2O = L-glutaminyl-tRNA(Gln) + L-glutamate + ADP + phosphate + H(+). In terms of biological role, allows the formation of correctly charged Gln-tRNA(Gln) through the transamidation of misacylated Glu-tRNA(Gln) in organisms which lack glutaminyl-tRNA synthetase. The reaction takes place in the presence of glutamine and ATP through an activated gamma-phospho-Glu-tRNA(Gln). The chain is Glutamyl-tRNA(Gln) amidotransferase subunit A from Nitrosospira multiformis (strain ATCC 25196 / NCIMB 11849 / C 71).